The following is a 148-amino-acid chain: MRSYSFWFLTAFLVFATLALGEAVKGGKEKWGNCPAEKGSCIKSGPSQCHADNDCPGDKKCCFLSCSFKCVSPDRIRKEGGNEDEDVSRSSPEPGGEPRPPGSSPSTSILSYYAVSFPPPGIGQMAPVPQGAESWNVGQEASPQKEWS.

An N-terminal signal peptide occupies residues 1–23 (MRSYSFWFLTAFLVFATLALGEA). Residues 27–74 (GKEKWGNCPAEKGSCIKSGPSQCHADNDCPGDKKCCFLSCSFKCVSPD) form the WAP domain. Intrachain disulfides connect C34/C62, C41/C66, C49/C61, and C55/C70. The tract at residues 74-148 (DRIRKEGGNE…QEASPQKEWS (75 aa)) is disordered.

The protein resides in the secreted. Functionally, antibacterial protein. Putative acid-stable proteinase inhibitor. The protein is WAP four-disulfide core domain protein 12 (WFDC12) of Lemur catta (Ring-tailed lemur).